The sequence spans 366 residues: L-tyrosine C(3)-methyltransferase (366 aa).

A compositionally biased stretch (polar residues) spans 1–12 (MTISLENTTVGQ). Positions 1–22 (MTISLENTTVGQNPAGGPPTGK) are disordered. Glu-223 contacts S-adenosyl-L-methionine.

The protein belongs to the class I-like SAM-binding methyltransferase superfamily. Cation-independent O-methyltransferase family.

The enzyme catalyses L-tyrosine + S-adenosyl-L-methionine = 3-methyl-L-tyrosine + S-adenosyl-L-homocysteine + H(+). It functions in the pathway antibiotic biosynthesis. Its function is as follows. C-methyltransferase that mediates the methylation of tyrosine into 3-methyl-L-tyrosine (3-Me-Tyr) in biosynthesis of saframycin A, a potent antitumor antibiotic that belongs to the tetrahydroisoquinoline family. Involved in biosynthesis of 3-hydroxy-5-methyl-O-methyltyrosine (3-OH-5-Me-OMe-Tyr), a core structure of saframycin A. This is L-tyrosine C(3)-methyltransferase from Streptomyces lavendulae.